The primary structure comprises 442 residues: Magnesium transporter MRS2-1 (442 aa).

A disordered region spans residues 1 to 30 (MSELKERLLPPRPASAMNLRDASVTRPSAS). 2 consecutive transmembrane segments (helical) span residues 378–398 (LLLT…GIFG) and 414–434 (WVLI…VWFF). The Required for magnesium transport activity signature appears at 398–400 (GMN).

The protein belongs to the CorA metal ion transporter (MIT) (TC 1.A.35.5) family. In terms of tissue distribution, expressed in the whole plant except stems.

The protein localises to the membrane. Functionally, magnesium transporter that may mediate the influx of magnesium. This Arabidopsis thaliana (Mouse-ear cress) protein is Magnesium transporter MRS2-1 (MRS2-1).